The primary structure comprises 336 residues: Ferredoxin--NADP reductase (336 aa).

Positions 18, 37, 45, 50, 92, 127, 290, and 331 each coordinate FAD.

It belongs to the ferredoxin--NADP reductase type 2 family. As to quaternary structure, homodimer. The cofactor is FAD.

It carries out the reaction 2 reduced [2Fe-2S]-[ferredoxin] + NADP(+) + H(+) = 2 oxidized [2Fe-2S]-[ferredoxin] + NADPH. In Symbiobacterium thermophilum (strain DSM 24528 / JCM 14929 / IAM 14863 / T), this protein is Ferredoxin--NADP reductase.